Consider the following 123-residue polypeptide: Small ribosomal subunit protein uS13 (123 aa).

The segment at histidine 92–lysine 123 is disordered.

The protein belongs to the universal ribosomal protein uS13 family. Part of the 30S ribosomal subunit. Forms a loose heterodimer with protein S19. Forms two bridges to the 50S subunit in the 70S ribosome.

Its function is as follows. Located at the top of the head of the 30S subunit, it contacts several helices of the 16S rRNA. In the 70S ribosome it contacts the 23S rRNA (bridge B1a) and protein L5 of the 50S subunit (bridge B1b), connecting the 2 subunits; these bridges are implicated in subunit movement. Contacts the tRNAs in the A and P-sites. This chain is Small ribosomal subunit protein uS13, found in Clostridium tetani (strain Massachusetts / E88).